We begin with the raw amino-acid sequence, 884 residues long: Probable disease resistance protein At1g12290 (884 aa).

A coiled-coil region spans residues Leu-26–Gln-66. The region spanning Ala-139–Asn-443 is the NB-ARC domain. Residue Gly-182–Thr-189 participates in ATP binding. LRR repeat units follow at residues Val-519–Pro-540, Lys-541–Ser-563, Arg-566–Leu-588, Ser-590–Lys-612, Lys-613–Ser-635, and Asn-644–Glu-664.

The protein belongs to the disease resistance NB-LRR family.

Its function is as follows. Probable disease resistance protein. In Arabidopsis thaliana (Mouse-ear cress), this protein is Probable disease resistance protein At1g12290.